A 211-amino-acid polypeptide reads, in one-letter code: Probable GTP-binding protein EngB (211 aa).

The EngB-type G domain occupies 30–204 (EGFEVAFAGR…YTVLAGWMEL (175 aa)). GTP-binding positions include 38–45 (GRSNAGKS), 64–68 (GRTQL), 82–85 (DLPG), 149–152 (TKAD), and 182–185 (LFSA). Mg(2+)-binding residues include Ser-45 and Thr-66.

It belongs to the TRAFAC class TrmE-Era-EngA-EngB-Septin-like GTPase superfamily. EngB GTPase family. Mg(2+) is required as a cofactor.

Necessary for normal cell division and for the maintenance of normal septation. This Pseudomonas syringae pv. tomato (strain ATCC BAA-871 / DC3000) protein is Probable GTP-binding protein EngB.